The sequence spans 100 residues: Small ribosomal subunit protein uS14c (100 aa).

It belongs to the universal ribosomal protein uS14 family. As to quaternary structure, part of the 30S ribosomal subunit.

The protein resides in the plastid. It localises to the chloroplast. In terms of biological role, binds 16S rRNA, required for the assembly of 30S particles. This is Small ribosomal subunit protein uS14c from Crucihimalaya wallichii (Rock-cress).